A 122-amino-acid chain; its full sequence is uncharacterized protein (122 aa).

A compositionally biased stretch (polar residues) spans 1–10 (MGTGLRSQSL). The segment at 1–68 (MGTGLRSQSL…GQEWLPGSLG (68 aa)) is disordered. Basic and acidic residues predominate over residues 40-56 (QGREKSRSSDGGPERLD).

This is an uncharacterized protein from Bos taurus (Bovine).